The following is a 117-amino-acid chain: NADH-ubiquinone oxidoreductase chain 3 (117 aa).

3 helical membrane-spanning segments follow: residues 4–24 (IIFI…LASI), 60–80 (ITII…MIII), and 86–106 (IMIW…GLYH).

The protein belongs to the complex I subunit 3 family.

The protein localises to the mitochondrion membrane. It catalyses the reaction a ubiquinone + NADH + 5 H(+)(in) = a ubiquinol + NAD(+) + 4 H(+)(out). Its function is as follows. Core subunit of the mitochondrial membrane respiratory chain NADH dehydrogenase (Complex I) that is believed to belong to the minimal assembly required for catalysis. Complex I functions in the transfer of electrons from NADH to the respiratory chain. The immediate electron acceptor for the enzyme is believed to be ubiquinone. This Drosophila melanogaster (Fruit fly) protein is NADH-ubiquinone oxidoreductase chain 3 (mt:ND3).